A 149-amino-acid polypeptide reads, in one-letter code: SsrA-binding protein (149 aa).

Residues 121 to 149 (GKGEHDKRDTIKDREGKREVERAMKSRSR) are disordered.

It belongs to the SmpB family.

The protein resides in the cytoplasm. Functionally, required for rescue of stalled ribosomes mediated by trans-translation. Binds to transfer-messenger RNA (tmRNA), required for stable association of tmRNA with ribosomes. tmRNA and SmpB together mimic tRNA shape, replacing the anticodon stem-loop with SmpB. tmRNA is encoded by the ssrA gene; the 2 termini fold to resemble tRNA(Ala) and it encodes a 'tag peptide', a short internal open reading frame. During trans-translation Ala-aminoacylated tmRNA acts like a tRNA, entering the A-site of stalled ribosomes, displacing the stalled mRNA. The ribosome then switches to translate the ORF on the tmRNA; the nascent peptide is terminated with the 'tag peptide' encoded by the tmRNA and targeted for degradation. The ribosome is freed to recommence translation, which seems to be the essential function of trans-translation. The sequence is that of SsrA-binding protein from Polaromonas sp. (strain JS666 / ATCC BAA-500).